A 410-amino-acid polypeptide reads, in one-letter code: Protein ea47 (410 aa).

This is Protein ea47 (ea47) from Escherichia coli (Bacteriophage lambda).